Consider the following 182-residue polypeptide: MPLLNSLATPYAEALLQVTEARSESQTVAEQCKQLLSVWDSSAEFRDAMVSPVLEPSSKKKALQGLLAEQVTPSLMNLLKVLADRQRLQAFEAVMNRFLELYREQQGITLAQVRSAKPLSEAQQAALSKKVQAMAGTSKVDIDLSVDPALIGGFVVSLGSQVIDASLAGQVRRLGLALAKAS.

Belongs to the ATPase delta chain family. As to quaternary structure, F-type ATPases have 2 components, F(1) - the catalytic core - and F(0) - the membrane proton channel. F(1) has five subunits: alpha(3), beta(3), gamma(1), delta(1), epsilon(1). CF(0) has four main subunits: a(1), b(1), b'(1) and c(10-14). The alpha and beta chains form an alternating ring which encloses part of the gamma chain. F(1) is attached to F(0) by a central stalk formed by the gamma and epsilon chains, while a peripheral stalk is formed by the delta, b and b' chains.

It localises to the cellular thylakoid membrane. Its function is as follows. F(1)F(0) ATP synthase produces ATP from ADP in the presence of a proton or sodium gradient. F-type ATPases consist of two structural domains, F(1) containing the extramembraneous catalytic core and F(0) containing the membrane proton channel, linked together by a central stalk and a peripheral stalk. During catalysis, ATP synthesis in the catalytic domain of F(1) is coupled via a rotary mechanism of the central stalk subunits to proton translocation. This protein is part of the stalk that links CF(0) to CF(1). It either transmits conformational changes from CF(0) to CF(1) or is implicated in proton conduction. This Synechococcus sp. (strain CC9902) protein is ATP synthase subunit delta.